The sequence spans 1056 residues: Outer capsid protein VP5 (1056 aa).

Belongs to the orthoreovirus lambda-2 protein family.

It is found in the virion. The enzyme catalyses a 5'-end diphospho-ribonucleoside in mRNA + GTP + H(+) = a 5'-end (5'-triphosphoguanosine)-ribonucleoside in mRNA + diphosphate. It catalyses the reaction a 5'-end (5'-triphosphoguanosine)-ribonucleoside in mRNA + S-adenosyl-L-methionine = a 5'-end (N(7)-methyl 5'-triphosphoguanosine)-ribonucleoside in mRNA + S-adenosyl-L-homocysteine. In terms of biological role, outer capsid protein involved in mRNA capping. Catalyzes the last 3 enzymatic activities for formation of the 5' cap structure on the viral plus-strand transcripts, namely the RNA guanylyltransferase, RNA-7N- and RNA-2'O-methyltransferase activities. This chain is Outer capsid protein VP5 (S5), found in Aedes pseudoscutellaris reovirus (isolate France) (ApRV).